The primary structure comprises 391 residues: Formate-dependent phosphoribosylglycinamide formyltransferase (391 aa).

N(1)-(5-phospho-beta-D-ribosyl)glycinamide contacts are provided by residues 20–21 (EL) and glutamate 80. Residues arginine 112, lysine 153, 158-163 (SSGKGQ), 193-196 (EGFI), and glutamate 201 contribute to the ATP site. The region spanning 117–306 (RLAAETLGLP…EFALHVRAIL (190 aa)) is the ATP-grasp domain. Mg(2+)-binding residues include glutamate 265 and glutamate 277. Residues aspartate 284, lysine 354, and 361–362 (RR) each bind N(1)-(5-phospho-beta-D-ribosyl)glycinamide.

The protein belongs to the PurK/PurT family. Homodimer.

The enzyme catalyses N(1)-(5-phospho-beta-D-ribosyl)glycinamide + formate + ATP = N(2)-formyl-N(1)-(5-phospho-beta-D-ribosyl)glycinamide + ADP + phosphate + H(+). The protein operates within purine metabolism; IMP biosynthesis via de novo pathway; N(2)-formyl-N(1)-(5-phospho-D-ribosyl)glycinamide from N(1)-(5-phospho-D-ribosyl)glycinamide (formate route): step 1/1. In terms of biological role, involved in the de novo purine biosynthesis. Catalyzes the transfer of formate to 5-phospho-ribosyl-glycinamide (GAR), producing 5-phospho-ribosyl-N-formylglycinamide (FGAR). Formate is provided by PurU via hydrolysis of 10-formyl-tetrahydrofolate. In Shewanella sp. (strain MR-7), this protein is Formate-dependent phosphoribosylglycinamide formyltransferase.